A 321-amino-acid chain; its full sequence is Arabinan endo-1,5-alpha-L-arabinosidase A (321 aa).

Positions 1-19 (MYQLLSVASVPLLASLVHG) are cleaved as a signal peptide. Aspartate 34 functions as the Proton acceptor in the catalytic mechanism. Glutamate 200 functions as the Proton donor in the catalytic mechanism. N-linked (GlcNAc...) asparagine glycosylation is present at asparagine 295.

Belongs to the glycosyl hydrolase 43 family.

It carries out the reaction Endohydrolysis of (1-&gt;5)-alpha-arabinofuranosidic linkages in (1-&gt;5)-arabinans.. It functions in the pathway glycan metabolism; L-arabinan degradation. Its preferred substrate is linear 1,5-alpha-L-arabinan. The enzyme activity is progressively reduced as 1,5-alpha-chains become shorter or more highly substituted. This is Arabinan endo-1,5-alpha-L-arabinosidase A (abnA) from Aspergillus niger.